The sequence spans 185 residues: ATP synthase subunit delta, chloroplastic (185 aa).

Belongs to the ATPase delta chain family. In terms of assembly, F-type ATPases have 2 components, F(1) - the catalytic core - and F(0) - the membrane proton channel. F(1) has five subunits: alpha(3), beta(3), gamma(1), delta(1), epsilon(1). CF(0) has four main subunits: a(1), b(1), b'(1) and c(10-14). The alpha and beta chains form an alternating ring which encloses part of the gamma chain. F(1) is attached to F(0) by a central stalk formed by the gamma and epsilon chains, while a peripheral stalk is formed by the delta, b and b' chains.

The protein resides in the plastid. The protein localises to the chloroplast thylakoid membrane. Functionally, f(1)F(0) ATP synthase produces ATP from ADP in the presence of a proton or sodium gradient. F-type ATPases consist of two structural domains, F(1) containing the extramembraneous catalytic core and F(0) containing the membrane proton channel, linked together by a central stalk and a peripheral stalk. During catalysis, ATP synthesis in the catalytic domain of F(1) is coupled via a rotary mechanism of the central stalk subunits to proton translocation. In terms of biological role, this protein is part of the stalk that links CF(0) to CF(1). It either transmits conformational changes from CF(0) to CF(1) or is implicated in proton conduction. The polypeptide is ATP synthase subunit delta, chloroplastic (Gracilaria tenuistipitata var. liui (Red alga)).